Reading from the N-terminus, the 506-residue chain is CDK5 regulatory subunit-associated protein 3 (506 aa).

3 consecutive short sequence motifs (shuffled ATG8-binding motif) follow at residues I267–G270, I292–G295, and I310–G313. Residues W269–L506 are required for interaction with UFL1 and mediates interaction with CHEK1. The tract at residues D355–E370 is RPL10a-binding domain (RBD). A Glycyl lysine isopeptide (Lys-Gly) (interchain with G-Cter in SUMO2) cross-link involves residue K450.

The protein belongs to the CDK5RAP3 family. Substrate adapter component of the UFM1 ribosome E3 ligase (UREL) complex, composed of UFL1, DDRGK1 and CDK5RAP3. Interaction with UFL1 anchors CDK5RAP3 in the cytoplasm, preventing its translocation to the nucleus which allows expression of the CCND1 cyclin and progression of cells through the G1/S transition. Interacts with ATG8 family proteins MAP1LC3A, MAP1LC3B, GABARAP, GABARAPL1 and GABARAPL2. Interacts with CDK5R1; competes with CDK5RAP1 and CDK5RAP2. Interacts with RELA. Interacts with CHEK1; may negatively regulate CHEK1 and thereby stimulate entry into mitosis. Interacts with CDKN2A/ARF and MDM2; forms a ternary complex involved in regulation of p53/TP53. Interacts with MAPK14. Interacts with CCNB1. Interacts with TUBG1; may regulate CDK5RAP3 in mitotic G2/M transition checkpoint. As to quaternary structure, (Microbial infection) Interacts with hepatitis B virus large envelope protein mutant pre-s2; promotes mitotic entry. In terms of processing, may be phosphorylated by CDK5. Ubiquitinated. Probably triggers proteasomal degradation and is negatively regulated by UFL1. Post-translationally, may be ufmylated. In terms of processing, cleaved by caspases early during apoptosis, the resulting peptides may play a role in rupture of the nuclear envelope. Ubiquitously expressed. Expressed in heart, brain, placenta, lung, liver, skeletal muscle, kidney and pancreas. Isoform 3 is expressed in kidney, liver, skeletal muscle and placenta.

It is found in the endoplasmic reticulum membrane. The protein resides in the cytoplasm. It localises to the nucleus. Its subcellular location is the cytoskeleton. The protein localises to the microtubule organizing center. It is found in the centrosome. In terms of biological role, substrate adapter of E3 ligase complexes mediating ufmylation, the covalent attachment of the ubiquitin-like modifier UFM1 to substrate proteins, and which is involved in various processes, such as ribosome recycling and reticulophagy (also called ER-phagy). As part of the UREL complex, plays a key role in ribosome recycling by promoting mono-ufmylation of RPL26/uL24 subunit of the 60S ribosome. Ufmylation of RPL26/uL24 occurs on free 60S ribosomes following ribosome dissociation: it weakens the junction between post-termination 60S subunits and SEC61 translocons, promoting release and recycling of the large ribosomal subunit from the endoplasmic reticulum membrane. Ufmylation of RPL26/uL24 and subsequent 60S ribosome recycling either take place after normal termination of translation or after ribosome stalling during cotranslational translocation at the endoplasmic reticulum. Within the UREL complex, CDK5RAP3 acts as a substrate adapter that constrains UFL1 ligase activity to mono-ufmylate RPL26/uL24 at 'Lys-134'. The UREL complex is also involved in reticulophagy in response to endoplasmic reticulum stress by promoting ufmylation of proteins such as CYB5R3, thereby promoting lysosomal degradation of ufmylated proteins. Also acts as a regulator of transcription: negatively regulates NF-kappa-B-mediated gene transcription through the control of RELA phosphorylation. Also regulates mitotic G2/M transition checkpoint and mitotic G2 DNA damage checkpoint. Through its interaction with CDKN2A/ARF and MDM2 may induce MDM2-dependent p53/TP53 ubiquitination, stabilization and activation in the nucleus, thereby promoting G1 cell cycle arrest and inhibition of cell proliferation. May also play a role in the rupture of the nuclear envelope during apoptosis. May regulate MAPK14 activity by regulating its dephosphorylation by PPM1D/WIP1. Required for liver development. Its function is as follows. (Microbial infection) May be negatively regulated by hepatitis B virus large envelope protein mutant pre-s2 to promote mitotic entry. This is CDK5 regulatory subunit-associated protein 3 from Homo sapiens (Human).